Reading from the N-terminus, the 25-residue chain is Neuromedin-U-25 (25 aa).

N25 is modified (asparagine amide).

The protein belongs to the NmU family.

The protein localises to the secreted. Stimulates uterine smooth muscle contraction and causes selective vasoconstriction. This is Neuromedin-U-25 (NMU) from Oryctolagus cuniculus (Rabbit).